Reading from the N-terminus, the 315-residue chain is Glycine--tRNA ligase alpha subunit (315 aa).

This sequence belongs to the class-II aminoacyl-tRNA synthetase family. Tetramer of two alpha and two beta subunits.

The protein localises to the cytoplasm. The catalysed reaction is tRNA(Gly) + glycine + ATP = glycyl-tRNA(Gly) + AMP + diphosphate. In Pseudomonas putida (strain GB-1), this protein is Glycine--tRNA ligase alpha subunit.